We begin with the raw amino-acid sequence, 473 residues long: 3-isopropylmalate dehydratase large subunit (473 aa).

[4Fe-4S] cluster is bound by residues cysteine 351, cysteine 414, and cysteine 417.

It belongs to the aconitase/IPM isomerase family. LeuC type 1 subfamily. In terms of assembly, heterodimer of LeuC and LeuD. [4Fe-4S] cluster is required as a cofactor.

The enzyme catalyses (2R,3S)-3-isopropylmalate = (2S)-2-isopropylmalate. The protein operates within amino-acid biosynthesis; L-leucine biosynthesis; L-leucine from 3-methyl-2-oxobutanoate: step 2/4. Functionally, catalyzes the isomerization between 2-isopropylmalate and 3-isopropylmalate, via the formation of 2-isopropylmaleate. In Variovorax paradoxus (strain S110), this protein is 3-isopropylmalate dehydratase large subunit.